The following is a 635-amino-acid chain: Threonine--tRNA ligase (635 aa).

Positions 1–61 (MVSIRLPDGS…DRDASLAIVT (61 aa)) constitute a TGS domain. Positions 242–533 (DHRKLGKQLD…LIEHHAGAMP (292 aa)) are catalytic. Residues cysteine 333, histidine 384, and histidine 510 each contribute to the Zn(2+) site.

It belongs to the class-II aminoacyl-tRNA synthetase family. In terms of assembly, homodimer. It depends on Zn(2+) as a cofactor.

Its subcellular location is the cytoplasm. It carries out the reaction tRNA(Thr) + L-threonine + ATP = L-threonyl-tRNA(Thr) + AMP + diphosphate + H(+). In terms of biological role, catalyzes the attachment of threonine to tRNA(Thr) in a two-step reaction: L-threonine is first activated by ATP to form Thr-AMP and then transferred to the acceptor end of tRNA(Thr). Also edits incorrectly charged L-seryl-tRNA(Thr). In Burkholderia orbicola (strain MC0-3), this protein is Threonine--tRNA ligase.